The chain runs to 366 residues: Glycine betaine monooxygenase reductase subunit (366 aa).

The FAD-binding FR-type domain maps to 16-119; sequence NGRHLVRCVK…HGPVGLFNAI (104 aa). One can recognise a 2Fe-2S ferredoxin-type domain in the interval 282–366; the sequence is HQVEFTATGK…VPKGDVVIDY (85 aa). Positions 316, 321, 324, and 354 each coordinate [2Fe-2S] cluster.

In the N-terminal section; belongs to the FAD-binding oxidoreductase type 6 family. As to quaternary structure, the system is composed of an oxygenase subunit (GbcA) and a reductase subunit (GbcB). FAD serves as cofactor. It depends on [2Fe-2S] cluster as a cofactor.

It carries out the reaction glycine betaine + NADH + O2 + H(+) = N,N-dimethylglycine + formaldehyde + NAD(+) + H2O. In terms of biological role, involved in degradation of glycine betaine. Part of a Rieske-type oxygenase system that catalyzes the conversion of glycine betaine (GB) to dimethylglycine (DMG). This subunit is the ferredoxin reductase component of the system. Required for growth on choline and GB, but not for growth on DMG. The protein is Glycine betaine monooxygenase reductase subunit of Pseudomonas aeruginosa (strain ATCC 15692 / DSM 22644 / CIP 104116 / JCM 14847 / LMG 12228 / 1C / PRS 101 / PAO1).